The following is a 51-amino-acid chain: Sperm protamine P1 (51 aa).

This sequence belongs to the protamine P1 family. In terms of tissue distribution, testis.

Its subcellular location is the nucleus. It localises to the chromosome. Its function is as follows. Protamines substitute for histones in the chromatin of sperm during the haploid phase of spermatogenesis. They compact sperm DNA into a highly condensed, stable and inactive complex. This chain is Sperm protamine P1 (PRM1), found in Trachypithecus johnii (Nilgiri langur).